Reading from the N-terminus, the 389-residue chain is Na(+)/H(+) antiporter NhaA (389 aa).

Transmembrane regions (helical) follow at residues 24-44, 56-76, 94-114, 122-142, 152-172, 176-196, 216-236, 259-279, 291-311, 326-346, and 363-383; these read ILLI…AGPA, LSIE…FVGL, LLPI…HYTL, AGTG…LALL, VFLT…IAMF, QFSL…LVLN, FLML…AFAI, PVAF…VIGS, LGII…LSFV, WTHI…SIFI, and MAIL…LSFF.

The protein belongs to the NhaA Na(+)/H(+) (TC 2.A.33) antiporter family.

It is found in the cell inner membrane. It carries out the reaction Na(+)(in) + 2 H(+)(out) = Na(+)(out) + 2 H(+)(in). Its function is as follows. Na(+)/H(+) antiporter that extrudes sodium in exchange for external protons. This chain is Na(+)/H(+) antiporter NhaA, found in Dechloromonas aromatica (strain RCB).